A 309-amino-acid polypeptide reads, in one-letter code: Tagatose-6-phosphate kinase (309 aa).

The protein belongs to the carbohydrate kinase PfkB family. LacC subfamily.

It carries out the reaction D-tagatofuranose 6-phosphate + ATP = D-tagatofuranose 1,6-bisphosphate + ADP + H(+). Its pathway is carbohydrate metabolism; D-tagatose 6-phosphate degradation; D-glyceraldehyde 3-phosphate and glycerone phosphate from D-tagatose 6-phosphate: step 1/2. This is Tagatose-6-phosphate kinase from Streptococcus pneumoniae serotype 19F (strain G54).